The sequence spans 2059 residues: MSLSGSQTRLHQISRRSSSRPDLTAVGYSLPRNDGAQFFTSGNGYQSDYNDGYMQTYTQTFSKNSQGGGAGGAQSMSSMAVQKRAQMLYSDCMGFLQRAQGLLETMGPASEVDKNMMAAQDAMDQLRKCAVDMRNAGLPNDMILRSLEDCHSFYADIRNSITGTTIRRTGGTVSGTIGGTISGTIGGTVGGWDDPSKSFQDALSWINQKKRLIETSGFGENSEAISQQILNHNKFHSSIQRSQEVDRARDDLMQSREKAGLHALDQEWDSLQKMSHARMDHLRDLQSIIEEISRAIMWVNDREEEELVFDWGDKNIDNYIPQKQESYSKLMSDLEEKEKELNKLKAKVDMLLKNQHPASDKIEAYMDTLQTQWSWLLQITKCIHVHLKENAAYSQFFKEANETYSRLQKDHENIRKKFGCDKTTPLENLNDMLKNLEKEKEKVIENKRQVQTLVSKSKNIVCLKPRNPEEKSSSPVIVQALCDFKQDQKGIMKGNEGILKDNSQRSKWHVTGPGGLEMLIPSVCLIIPPPNPLSISLANKNEQYYEAIMSIWSQLYINIKSLISWQYCLRDIQHINSLTLSMLTQMRPEEYRQTIKNLEIHYQEFLRNSLGSEMFGDDDKRKMELQYAGAQSHYDQLVIQLPNYRENGVIREVVMVETDSKLKSEVSSGKTATGVSSGKTATGVSSGKTSSSVSVSGLNVSLLSDLSALRRRLETAESGLTKHLHVPLKENSVQECSQRLAQLQAVHRDLDSIRDEYLHLREKIMRELEGSSDPEQSRYLRAELDLINQKLGSLQGFSSAYIQRLGALQALLQHLLQAEDIIKVHEARLTEKETSSLDLNEVEKYCMTLKTMKAELEQKKGVLKAMETELSKAVHWNSQIDQSFHQCDVDLSRYTELVGQMTDRWRRIVTQIDSRTWDLEKQEKQLNHYQQTSSTINRWIQDTRQRQDTLQITKFNSVDNLMDHLNQQKALYSEIKGKKEKVDAVVKDSDTCAASIKDYELQLASYSAGLETLLNIPIKKTMLQSPATVLREEATDLQSRYIELLTRSSDYYKFLGEMLKNMEELKMRNTKIELLEEELRRLKDNLKDQNQKNKSLEDSLTRFRLELTQSKEQLISMEEVKRTQARQCNTAQESLDSTQNQLKSLQDEMSRLTFLIEEEKRKRRLAEERYTNQQEEYELAMRKRQKELEELTLSKSQFERAIKEKEREIERLKLQLQDEASRRSAAELETSKTSMMIQRSDSNYKDIVQERDSLLIKLKLLQQDKDKQQRYEEELRRIKLTLESETKQKQRLQDEIDKITKDFKYWKSQYELKEGQIRQSEMDRDRVERDRASLQSEIQRLTAELRSVEERYRGRLQSSDKEISELMRKKESLEIELRRLQQRPAATWKQTQTDEISKPVVEQKLTVQGLRGEVSLTELVESDLLDQTDLDKINRGQLTSKDIEHKLKSYLGGSDCIAGIYDEAKDRVMPFYQAMKDGLLRRGTTLELLEAQAASGFIIDPVNNVCMTVEEAWKRGLVGKEFKDKLLSAEKAVTGYKDPATGKIISLFQAIEKEIIEKGHGIRLLEAQIASGGIIDPKGSHRIDVEVAYRKGYFDREMNEILSYEGDDTKGFFDPNTHENLTYLELKKRCIKDPKTGLMLLPLNDKQKPKQTTTQKNTLRKRRVVIVDPDTGKEMTVREAYHRELIDYDTFLELSEQECEWEEITIETSDGNKRLLIVDRKTGIQYDIQESLQRGIINKQTLEKYRAGTMTLTEFAALITSKSNSSELAIFSSSPEDVATCSSPTQPSSPTVRKRFASVSITLSPPSDIFDDQSPVGAIFDTETLEKITIPEAQRRGIVDNITAQRLLEAQVCSGGIINPATGQRLSLKDAVQQSLIDEDMSVKLKPAQKAYDGFEDVKTKRKLSAAEAMKEKWLPYEAGQRFLEFQYLTGGLIEPGTGRRVSIEEAIRKGWLDGKGAQKLQDTRNYIKNLTCPKTKLKISYKEAMDNCMVEENNGMKMLQATSMSTKGISSPYNVSSGPSSRSGSRAGSRTGSRSGSRRGSVDYSSSSVSYTFFSSAS.

Over residues 1-11 (MSLSGSQTRLH) the composition is skewed to polar residues. Residues 1 to 25 (MSLSGSQTRLHQISRRSSSRPDLTA) are disordered. Coiled coils occupy residues 320–354 (IPQK…LLKN) and 397–453 (FKEA…VQTL). The segment at 665-690 (EVSSGKTATGVSSGKTATGVSSGKTS) is disordered. Residues 671 to 690 (TATGVSSGKTATGVSSGKTS) are compositionally biased toward low complexity. Coiled coils occupy residues 1062 to 1229 (MEEL…AELE) and 1261 to 1383 (LQQD…LQQR). 6 Plectin repeats span residues 1450–1488 (YLGG…TLEL), 1489–1526 (LEAQ…KDKL), 1564–1602 (LLEA…NEIL), 1666–1694 (IVDP…FLEL), 1847–1885 (LLEA…SVKL), and 1923–1961 (FLEF…AQKL). The interval 2008–2059 (KGISSPYNVSSGPSSRSGSRAGSRTGSRSGSRRGSVDYSSSSVSYTFFSSAS) is disordered. Residues 2011 to 2059 (SSPYNVSSGPSSRSGSRAGSRTGSRSGSRRGSVDYSSSSVSYTFFSSAS) are compositionally biased toward low complexity.

Belongs to the plakin or cytolinker family.

The protein resides in the cell junction. It localises to the desmosome. Its subcellular location is the cell membrane. Its function is as follows. Involved in the organization of desmosome cell-cell junctions. Of particular importance in cell adhesion in the skin and during cardiac development. May also play a role in the regulation of Wnt, TGF-beta and Hippo signaling pathways. The polypeptide is Desmoplakin-A (Danio rerio (Zebrafish)).